Consider the following 93-residue polypeptide: UPF0175 protein AF_0100 (93 aa).

Belongs to the UPF0175 family.

The polypeptide is UPF0175 protein AF_0100 (Archaeoglobus fulgidus (strain ATCC 49558 / DSM 4304 / JCM 9628 / NBRC 100126 / VC-16)).